The following is a 631-amino-acid chain: Vacuolar-sorting receptor 6 (631 aa).

Residues 1-25 (MSLIHKGATLALFLALTMVVNGVFG) form the signal peptide. The Lumenal segment spans residues 26–563 (RFIVEKSSVT…CIERSGSRIG (538 aa)). A PA domain is found at 57 to 165 (NYGGYMIGSV…SFANTLKQAL (109 aa)). N-linked (GlcNAc...) asparagine glycans are attached at residues Asn-294 and Asn-431. 2 EGF-like domains span residues 413 to 463 (ETNE…TSCE) and 494 to 540 (ETSG…FECK). 5 disulfides stabilise this stretch: Cys-417-Cys-435, Cys-424-Cys-444, Cys-446-Cys-462, Cys-498-Cys-511, and Cys-530-Cys-539. Residues 564-584 (WFPTFVILAAVASICVGGYVF) traverse the membrane as a helical segment. Topologically, residues 585–631 (YKYRLRSYMDSEIMAIMSQYMPLESQNTTDPMTGESQHQQLRLTSAA) are cytoplasmic. Positions 604 to 607 (YMPL) match the Tyrosine-based internalization motif motif. Residues 610–631 (QNTTDPMTGESQHQQLRLTSAA) are disordered.

This sequence belongs to the VSR (BP-80) family. As to expression, expressed in seedlings, roots, leaves, flowers and siliques.

Its subcellular location is the membrane. It localises to the golgi apparatus membrane. The protein localises to the cytoplasmic vesicle. It is found in the clathrin-coated vesicle membrane. The protein resides in the prevacuolar compartment membrane. Its function is as follows. Vacuolar-sorting receptor (VSR) involved in clathrin-coated vesicles sorting from Golgi apparatus to vacuoles. The sequence is that of Vacuolar-sorting receptor 6 (VSR6) from Arabidopsis thaliana (Mouse-ear cress).